Here is a 120-residue protein sequence, read N- to C-terminus: Chaperonin GroEL (120 aa).

Residue 23–27 (DGTTT) coordinates ATP.

The protein belongs to the chaperonin (HSP60) family. Forms a cylinder of 14 subunits composed of two heptameric rings stacked back-to-back. Interacts with the co-chaperonin GroES.

Its subcellular location is the cytoplasm. The enzyme catalyses ATP + H2O + a folded polypeptide = ADP + phosphate + an unfolded polypeptide.. Its function is as follows. Together with its co-chaperonin GroES, plays an essential role in assisting protein folding. The GroEL-GroES system forms a nano-cage that allows encapsulation of the non-native substrate proteins and provides a physical environment optimized to promote and accelerate protein folding. The sequence is that of Chaperonin GroEL from Mycolicibacterium vaccae (Mycobacterium vaccae).